A 305-amino-acid chain; its full sequence is Aquaporin-1 (305 aa).

Residues 1 to 34 (MSSNDSNDTDKQHTRLDPTGVDDAYIPPEQPETK) are disordered. Residues 1-48 (MSSNDSNDTDKQHTRLDPTGVDDAYIPPEQPETKHHRFKISKDTLRNH) lie on the Cytoplasmic side of the membrane. A helical transmembrane segment spans residues 49–69 (FIAAAGEFCGTFMFLWCAYVI). At 70–91 (CNVANHDVALVAAPDGSHPGQL) the chain is on the extracellular side. The helical transmembrane segment at 92–112 (IMIAIGFGFSVMFSIWCFAGV) threads the bilayer. At 113–136 (SGGALNPAMSLSLCLARAVSPTRC) the chain is on the cytoplasmic side. The NPA 1 signature appears at 118 to 120 (NPA). Residues 137 to 157 (VVMWVSQIVAGMAAGGAASAM) traverse the membrane as a helical segment. Residues 158–176 (TPGEVLFANSLGLGCSRTR) lie on the Extracellular side of the membrane. The helical transmembrane segment at 177–197 (GLFLEMFGTAILCLTVLMTAV) threads the bilayer. The Cytoplasmic portion of the chain corresponds to 198–203 (EKRETN). A helical membrane pass occupies residues 204–224 (FMAALPIGISLFIAHVALTAY). Over 225 to 248 (TGTGVNPARSLGAAVAARYFPHYH) the chain is Extracellular. An NPA 2 motif is present at residues 230-232 (NPA). The chain crosses the membrane as a helical span at residues 249–269 (WIYWIGTLLGSILAWSVWQLL). The Cytoplasmic segment spans residues 270-305 (QILDYTTYVTAEKAASTKEKAQKKGETSSSSAVAEV). The span at 286 to 295 (TKEKAQKKGE) shows a compositional bias: basic and acidic residues. The tract at residues 286–305 (TKEKAQKKGETSSSSAVAEV) is disordered. Positions 296 to 305 (TSSSSAVAEV) are enriched in polar residues.

It belongs to the MIP/aquaporin (TC 1.A.8) family.

The protein localises to the endoplasmic reticulum membrane. Its subcellular location is the cell membrane. Water channel required to facilitate the transport of water across membranes. Involved in sporulation, freeze tolerance and osmotolerance. Is non-functional in most laboratory strains. This is Aquaporin-1 (AQY1) from Saccharomyces cerevisiae (strain YJM789) (Baker's yeast).